The sequence spans 279 residues: NH(3)-dependent NAD(+) synthetase (279 aa).

46–53 (GISGGQDS) is an ATP binding site. Aspartate 52 contacts Mg(2+). Residue arginine 145 coordinates deamido-NAD(+). Residue threonine 165 participates in ATP binding. Glutamate 170 contributes to the Mg(2+) binding site. Deamido-NAD(+) is bound by residues lysine 178 and aspartate 185. ATP-binding residues include lysine 194 and threonine 216. 265–266 (HK) lines the deamido-NAD(+) pocket.

The protein belongs to the NAD synthetase family. Homodimer.

The catalysed reaction is deamido-NAD(+) + NH4(+) + ATP = AMP + diphosphate + NAD(+) + H(+). Its pathway is cofactor biosynthesis; NAD(+) biosynthesis; NAD(+) from deamido-NAD(+) (ammonia route): step 1/1. In terms of biological role, catalyzes the ATP-dependent amidation of deamido-NAD to form NAD. Uses ammonia as a nitrogen source. This chain is NH(3)-dependent NAD(+) synthetase, found in Rhodococcus opacus (strain B4).